Consider the following 308-residue polypeptide: Mannan endo-1,4-beta-mannosidase (308 aa).

E125 functions as the Proton donor in the catalytic mechanism. The Nucleophile role is filled by E220. Positions 284–308 (DGLQETSKPSTVFTDDNGGHPEPPT) are disordered. Residues 287-297 (QETSKPSTVFT) show a composition bias toward polar residues.

The protein belongs to the glycosyl hydrolase 5 (cellulase A) family.

It carries out the reaction Random hydrolysis of (1-&gt;4)-beta-D-mannosidic linkages in mannans, galactomannans and glucomannans.. In terms of biological role, catalyzes the endo hydrolysis of beta-1,4-linked mannan, galactomannan and glucomannan. It is able to hydrolyze mannosidic linkages that are flanked by mannose or glucose. The sequence is that of Mannan endo-1,4-beta-mannosidase from Salipaludibacillus agaradhaerens (Bacillus agaradhaerens).